Here is a 422-residue protein sequence, read N- to C-terminus: Keratin, type II cytoskeletal 80 (422 aa).

The head stretch occupies residues 1–82 (MACRSCVVGF…DPAIQQQKNN (82 aa)). Phosphoserine is present on serine 45. The coil 1A stretch occupies residues 83 to 118 (EKEEMKVLNDKFASLIGKVQALEQRNQLLETRWHFL). The IF rod domain occupies 83 to 394 (EKEEMKVLND…KLMEGEESRM (312 aa)). A linker 1 region spans residues 119-135 (QSQDSATFDLGHLYEEY). A coil 1B region spans residues 136–227 (QGRLQEELRK…SIYEQELKDL (92 aa)). Residues 228–251 (AAQLKDVSVTVGMDSRCHIDLSGI) are linker 12. The segment at 252-390 (VEEVKAQYDA…ATYRKLMEGE (139 aa)) is coil 2. The segment at 391–422 (ESRMDMPSATVVSAVQARCRTAPTLPHPLCSL) is tail.

Belongs to the intermediate filament family. In terms of assembly, heterotetramer of two type I and two type II keratins.

The chain is Keratin, type II cytoskeletal 80 (KRT80) from Bos taurus (Bovine).